We begin with the raw amino-acid sequence, 197 residues long: Recombination protein RecR (197 aa).

Residues 56-71 (CPVCGTLDTRAPCSIC) form a C4-type zinc finger. Residues 79 to 174 (TLICVVRDVA…TVSGLAQGVP (96 aa)) enclose the Toprim domain.

The protein belongs to the RecR family.

Functionally, may play a role in DNA repair. It seems to be involved in an RecBC-independent recombinational process of DNA repair. It may act with RecF and RecO. This Rhodospirillum rubrum (strain ATCC 11170 / ATH 1.1.1 / DSM 467 / LMG 4362 / NCIMB 8255 / S1) protein is Recombination protein RecR.